Reading from the N-terminus, the 358-residue chain is Phospho-N-acetylmuramoyl-pentapeptide-transferase (358 aa).

10 consecutive transmembrane segments (helical) span residues 21–41 (YLTL…FVVG), 71–91 (TMGG…WADL), 95–115 (YIWV…VDDY), 133–153 (FWQS…ASVA), 166–186 (VAVN…VGSS), 197–217 (GLAV…AYAA), 234–254 (AGEL…FLWF), 261–281 (VFMG…LAVL), 286–306 (LVLF…MLQV), and 337–357 (IVRF…TLKI).

Belongs to the glycosyltransferase 4 family. MraY subfamily. The cofactor is Mg(2+).

The protein resides in the cell inner membrane. It catalyses the reaction UDP-N-acetyl-alpha-D-muramoyl-L-alanyl-gamma-D-glutamyl-meso-2,6-diaminopimeloyl-D-alanyl-D-alanine + di-trans,octa-cis-undecaprenyl phosphate = di-trans,octa-cis-undecaprenyl diphospho-N-acetyl-alpha-D-muramoyl-L-alanyl-D-glutamyl-meso-2,6-diaminopimeloyl-D-alanyl-D-alanine + UMP. It functions in the pathway cell wall biogenesis; peptidoglycan biosynthesis. Functionally, catalyzes the initial step of the lipid cycle reactions in the biosynthesis of the cell wall peptidoglycan: transfers peptidoglycan precursor phospho-MurNAc-pentapeptide from UDP-MurNAc-pentapeptide onto the lipid carrier undecaprenyl phosphate, yielding undecaprenyl-pyrophosphoryl-MurNAc-pentapeptide, known as lipid I. The polypeptide is Phospho-N-acetylmuramoyl-pentapeptide-transferase (Nitrosococcus oceani (strain ATCC 19707 / BCRC 17464 / JCM 30415 / NCIMB 11848 / C-107)).